Consider the following 170-residue polypeptide: Ureidoglycolate lyase (170 aa).

This sequence belongs to the ureidoglycolate lyase family. Homodimer. Ni(2+) serves as cofactor.

The catalysed reaction is (S)-ureidoglycolate = urea + glyoxylate. It functions in the pathway nitrogen metabolism; (S)-allantoin degradation. Catalyzes the catabolism of the allantoin degradation intermediate (S)-ureidoglycolate, generating urea and glyoxylate. Involved in the utilization of allantoin as nitrogen source. This Pseudomonas syringae pv. syringae (strain B728a) protein is Ureidoglycolate lyase.